A 577-amino-acid chain; its full sequence is MRPQSAACLLLAIVGFVGATEWWESGNYYQIYPRSFRDSDGDGIGDLNGVTEKLQYLKDIGFTGTWLSPIFKSPMVDFGYDISDFYQIHPEYGTMEDFERMIAKAKEVGIKIILDFVPNHSSTENEWFTKSVDSDPVYKDFYIWHDGKINNETGEREPPSNWNSEFRYSAWEWNEVRQQYYLHQFAIQQADLNYRNPAVVNEMKNVIRFWLGKGVSGFRIDAVPYLFEVDLDRYNQYPDEPLTNDSVNCPDPDDHCYTQHIYTQDMPETIDMVYQWRELVDEFHVENGGDKRLLMTEAYTSFENIMTYYGNGVRNGSHIPFNFDFLTSINNASKAGEYVEHIKKWMDAMPEGVYANWVLGNHDNKRVASRFGVQRTDLINILLQTLPGHAVTYNGEELGMTDVWISWEDTVDPNACNSDPDNYYARSRDPARSPYQWDASSKAGFTSADHTWLPVADDYKTNNALQQLRAPRSHLQIFKKLVRVRKEPSFRQGELNIQAIDDDVIIYSRQKTGSDLYVIVLNLGSTSKTLDLTKYYELGTQAEVITTSLSSQYIDGDVIKSTEFVANPYVGTVLVAV.

An N-terminal signal peptide occupies residues 1 to 19; that stretch reads MRPQSAACLLLAIVGFVGA. 2 N-linked (GlcNAc...) asparagine glycosylation sites follow: N119 and N151. D221 functions as the Nucleophile in the catalytic mechanism. The N-linked (GlcNAc...) asparagine glycan is linked to N244. The active-site Proton donor is the E297. N315 and N331 each carry an N-linked (GlcNAc...) asparagine glycan.

It belongs to the glycosyl hydrolase 13 family.

It carries out the reaction Hydrolysis of terminal, non-reducing (1-&gt;4)-linked alpha-D-glucose residues with release of alpha-D-glucose.. This is Maltase A1 (Mal-A1) from Drosophila melanogaster (Fruit fly).